The primary structure comprises 298 residues: NAD kinase (298 aa).

Asp80 acts as the Proton acceptor in catalysis. NAD(+) contacts are provided by residues 80 to 81 (DG), 154 to 155 (ND), Arg182, Asp184, 195 to 200 (TAYALS), Ala219, and Gln253.

It belongs to the NAD kinase family. Requires a divalent metal cation as cofactor.

The protein localises to the cytoplasm. The enzyme catalyses NAD(+) + ATP = ADP + NADP(+) + H(+). Functionally, involved in the regulation of the intracellular balance of NAD and NADP, and is a key enzyme in the biosynthesis of NADP. Catalyzes specifically the phosphorylation on 2'-hydroxyl of the adenosine moiety of NAD to yield NADP. The protein is NAD kinase of Acidovorax ebreus (strain TPSY) (Diaphorobacter sp. (strain TPSY)).